The chain runs to 1828 residues: Separin (1828 aa).

The 95-residue stretch at 1647-1741 folds into the Peptidase C50 domain; sequence KEAGSYILNP…SGALYECGSF (95 aa). Cys-1730 is an active-site residue.

In terms of assembly, interacts with cut2. Interacts with rad21.

It localises to the cytoplasm. Its subcellular location is the nucleus. The catalysed reaction is All bonds known to be hydrolyzed by this endopeptidase have arginine in P1 and an acidic residue in P4. P6 is often occupied by an acidic residue or by a hydroxy-amino-acid residue, the phosphorylation of which enhances cleavage.. It is inactivated via its interaction with cut2, which probably covers its active site. Cut2 degradation at anaphase, liberates it and triggers rad21 cleavage. Functionally, caspase-like protease, which plays a central role in the chromosome segregation by cleaving the rad21 subunit of the cohesin complex at the onset of anaphase. During most of the cell cycle, it is inactivated by securin/cut2 protein. It is also required for pointed nuclear formation. The sequence is that of Separin (cut1) from Schizosaccharomyces pombe (strain 972 / ATCC 24843) (Fission yeast).